The chain runs to 179 residues: Signal peptidase complex subunit 2 (179 aa).

Topologically, residues 1-48 (MSGNNVQEEDSTFHVSNLYSETEIKKITQDFISEKIREQNFEEIVKYS) are cytoplasmic. The helical transmembrane segment at 49 to 69 (NIRIFLSLVLIVIGTYCSIFV) threads the bilayer. Residues 70-74 (QYKKN) are Extracellular-facing. Residues 75-95 (PVIMIQLLVAFFVVSTTLIIF) traverse the membrane as a helical segment. Residues 96–179 (EYFFFDDVFM…AHGRTLKLKN (84 aa)) lie on the Cytoplasmic side of the membrane.

The protein belongs to the SPCS2 family. As to quaternary structure, component of the signal peptidase complex (SPC) composed of a catalytic subunit SEC11/SPC21 and three accessory subunits SPC25, SPC3/SPC22, SPC1/SPC12. The complex induces a local thinning of the ER membrane which is used to measure the length of the signal peptide (SP) h-region of protein substrates. This ensures the selectivity of the complex towards h-regions shorter than 18-20 amino acids. Within the complex, interacts with SEC11/SPC21. Component of a complex composed of SPC25 and PMV; the interaction is mediated via the transmembrane domains. The complex interacts with the SEC61 channel-forming translocon complex and is involved in the recognition and import of PEXEL motif-containing proteins into the ER for subsequent export.

Its subcellular location is the endoplasmic reticulum membrane. In terms of biological role, component of the signal peptidase complex (SPC) which catalyzes the cleavage of N-terminal signal sequences from nascent proteins as they are translocated into the lumen of the endoplasmic reticulum. Enhances the enzymatic activity of SPC and facilitates the interactions between different components of the translocation site. Also, regulatory component of the CSP25-plasmepsin PMV complex which cleaves the pentameric localization motif RxLxE/Q/D (termed Plasmodium export element (PEXEL)) located downstream of the N-terminal secretory signal sequence of several proteins. The polypeptide is Signal peptidase complex subunit 2 (Plasmodium falciparum (isolate 3D7)).